The chain runs to 1083 residues: Chitin synthase 2 (1083 aa).

2 stretches are compositionally biased toward basic and acidic residues: residues 1 to 10 and 18 to 30; these read MSSEREERTF and DDVR…ENQE. Disordered stretches follow at residues 1 to 248 and 260 to 294; these read MSSE…IADD and DDDV…TLNE. N-linked (GlcNAc...) asparagine glycosylation occurs at N23. Composition is skewed to polar residues over residues 38–49 and 61–70; these read SYASSMAESQTL and AKLQNKNRTS. An N-linked (GlcNAc...) asparagine glycan is attached at N67. Composition is skewed to basic and acidic residues over residues 78–100 and 117–128; these read LPRD…KEQQ and RLRDVNSHDKLP. 3 stretches are compositionally biased toward polar residues: residues 132–148, 177–191, and 282–292; these read SPRN…SRSG, RPWT…FTRS, and SYMSSESQDTL. A glycan (N-linked (GlcNAc...) asparagine) is linked at N417. 8 helical membrane passes run 708-728, 747-767, 785-805, 820-840, 860-880, 889-909, 987-1007, and 1020-1040; these read WLNG…QIWF, FIQL…FYFV, TVIF…QFIL, ISMI…FYII, NMIV…ILYL, SAQY…YAFC, YLVL…SEIY, and FLLW…TTFA.

This sequence belongs to the chitin synthase family. Class II subfamily.

The protein localises to the cell membrane. The catalysed reaction is [(1-&gt;4)-N-acetyl-beta-D-glucosaminyl](n) + UDP-N-acetyl-alpha-D-glucosamine = [(1-&gt;4)-N-acetyl-beta-D-glucosaminyl](n+1) + UDP + H(+). Functionally, polymerizes chitin, a structural polymer of the cell wall and septum, by transferring the sugar moiety of UDP-GlcNAc to the non-reducing end of the growing chitin polymer. Plays a critical role in cell wall integrity and virulence. The protein is Chitin synthase 2 of Fusarium oxysporum f. sp. lycopersici (strain 4287 / CBS 123668 / FGSC 9935 / NRRL 34936) (Fusarium vascular wilt of tomato).